The sequence spans 679 residues: tRNA uridine 5-carboxymethylaminomethyl modification enzyme MnmG (679 aa).

An FAD-binding site is contributed by 13–18 (GGGHAG). Residue 280-294 (GPRYCPSVEDKINRF) participates in NAD(+) binding.

Belongs to the MnmG family. As to quaternary structure, homodimer. Heterotetramer of two MnmE and two MnmG subunits. FAD serves as cofactor.

The protein resides in the cytoplasm. Functionally, NAD-binding protein involved in the addition of a carboxymethylaminomethyl (cmnm) group at the wobble position (U34) of certain tRNAs, forming tRNA-cmnm(5)s(2)U34. The protein is tRNA uridine 5-carboxymethylaminomethyl modification enzyme MnmG of Albidiferax ferrireducens (strain ATCC BAA-621 / DSM 15236 / T118) (Rhodoferax ferrireducens).